The chain runs to 56 residues: MAVQQNKPSRSKRGMRRSHDALTTSSVSVDKVSGETHLRHHITADGYYRGRKVIAK.

Residues 1–29 are disordered; the sequence is MAVQQNKPSRSKRGMRRSHDALTTSSVSV.

It belongs to the bacterial ribosomal protein bL32 family.

The polypeptide is Large ribosomal subunit protein bL32 (Pectobacterium atrosepticum (strain SCRI 1043 / ATCC BAA-672) (Erwinia carotovora subsp. atroseptica)).